A 269-amino-acid polypeptide reads, in one-letter code: Phosphoribosylformylglycinamidine synthase subunit PurQ (269 aa).

The Glutamine amidotransferase type-1 domain occupies 5 to 262 (VLVMSGYGIN…IESNLQIFKN (258 aa)). The active-site Nucleophile is Cys95. Residues His222, Glu224, and Glu232 contribute to the active site.

Part of the FGAM synthase complex composed of 1 PurL, 1 PurQ and 2 PurS subunits.

The protein localises to the cytoplasm. The enzyme catalyses N(2)-formyl-N(1)-(5-phospho-beta-D-ribosyl)glycinamide + L-glutamine + ATP + H2O = 2-formamido-N(1)-(5-O-phospho-beta-D-ribosyl)acetamidine + L-glutamate + ADP + phosphate + H(+). The catalysed reaction is L-glutamine + H2O = L-glutamate + NH4(+). Its pathway is purine metabolism; IMP biosynthesis via de novo pathway; 5-amino-1-(5-phospho-D-ribosyl)imidazole from N(2)-formyl-N(1)-(5-phospho-D-ribosyl)glycinamide: step 1/2. In terms of biological role, part of the phosphoribosylformylglycinamidine synthase complex involved in the purines biosynthetic pathway. Catalyzes the ATP-dependent conversion of formylglycinamide ribonucleotide (FGAR) and glutamine to yield formylglycinamidine ribonucleotide (FGAM) and glutamate. The FGAM synthase complex is composed of three subunits. PurQ produces an ammonia molecule by converting glutamine to glutamate. PurL transfers the ammonia molecule to FGAR to form FGAM in an ATP-dependent manner. PurS interacts with PurQ and PurL and is thought to assist in the transfer of the ammonia molecule from PurQ to PurL. The sequence is that of Phosphoribosylformylglycinamidine synthase subunit PurQ from Methanococcus maripaludis (strain C5 / ATCC BAA-1333).